Here is a 1381-residue protein sequence, read N- to C-terminus: Contactin-associated protein 1 (1381 aa).

Positions 1-20 are cleaved as a signal peptide; sequence MMSLRLFSILLAAVVSGAQG. Residues 21–1284 lie on the Extracellular side of the membrane; that stretch reads WGYYGCNEEL…PYYHDDGWIA (1264 aa). Positions 26–169 constitute an F5/8 type C domain; that stretch reads CNEELVGPLY…IGLRLGIYGC (144 aa). A disulfide bridge links cysteine 26 with cysteine 169. 3 N-linked (GlcNAc...) asparagine glycosylation sites follow: asparagine 121, asparagine 129, and asparagine 277. 2 consecutive Laminin G-like domains span residues 204–356 and 390–539; these read FKTE…AFRC and FRTW…FDTC. The cysteines at positions 324 and 356 are disulfide-linked. Residues asparagine 421, asparagine 500, and asparagine 519 are each glycosylated (N-linked (GlcNAc...) asparagine). 4 disulfide bridges follow: cysteine 507/cysteine 539, cysteine 545/cysteine 556, cysteine 550/cysteine 565, and cysteine 567/cysteine 577. The EGF-like 1 domain maps to 544 to 576; that stretch reads RCSPNMCEHDGRCYQSWDDFICYCELTGYKGVT. A Fibrinogen C-terminal domain is found at 577–796; it reads CHEPLYKESC…NTISFRTGAA (220 aa). N-linked (GlcNAc...) asparagine glycosylation is found at asparagine 598, asparagine 654, asparagine 665, asparagine 764, asparagine 805, asparagine 844, asparagine 861, asparagine 949, and asparagine 957. One can recognise a Laminin G-like 3 domain in the interval 814 to 958; that stretch reads FRTSAPSGVF…NASEGTFPNC (145 aa). Intrachain disulfides connect cysteine 931/cysteine 958, cysteine 962/cysteine 975, cysteine 969/cysteine 984, and cysteine 986/cysteine 996. Residues 962–996 form the EGF-like 2 domain; sequence CTHPRFPCFHGGRCVERYSYYTCDCDLTAFDGPYC. 2 N-linked (GlcNAc...) asparagine glycosylation sites follow: asparagine 1079 and asparagine 1148. Residues 1089 to 1251 enclose the Laminin G-like 4 domain; the sequence is FSTSSAPAVL…VQGELSESNC (163 aa). A disulfide bridge connects residues cysteine 1210 and cysteine 1251. The helical transmembrane segment at 1285-1305 threads the bilayer; it reads ILLGFLVAFLLLGLVGMLVLF. At 1306-1381 the chain is on the cytoplasmic side; that stretch reads YLQNHRYKGS…PQILEESRSE (76 aa). The segment at 1317–1381 is disordered; the sequence is HTNEPKATHD…PQILEESRSE (65 aa). A compositionally biased stretch (basic and acidic residues) spans 1319–1329; it reads NEPKATHDSHP. The SH3-binding motif lies at 1329-1366; it reads PGGKAPLPPSGPAQAPAPTPAPTQVPTPAPAPASGPGP. The segment covering 1334 to 1363 has biased composition (pro residues); that stretch reads PLPPSGPAQAPAPTPAPTQVPTPAPAPASG. Serine 1380 is subject to Phosphoserine.

It belongs to the neurexin family. As to quaternary structure, interacts with CNTN1/contactin in cis form. In terms of tissue distribution, predominantly expressed in brain. In myelinated nerve fibers of the CNS predominantly found in paranodal axoglial junctions. In unmyelinated nerve fibers of the CNS diffusely distributed along the entire surface. Weak expression is detected in ovary, pancreas, colon, lung, heart, intestine and testis.

The protein localises to the membrane. It is found in the cell junction. It localises to the paranodal septate junction. Functionally, required, with CNTNAP2, for radial and longitudinal organization of myelinated axons. Plays a role in the formation of functional distinct domains critical for saltatory conduction of nerve impulses in myelinated nerve fibers. Demarcates the paranodal region of the axo-glial junction. In association with contactin involved in the signaling between axons and myelinating glial cells. In Rattus norvegicus (Rat), this protein is Contactin-associated protein 1 (Cntnap1).